The primary structure comprises 288 residues: Small ribosomal subunit protein uS2 (288 aa).

Residues 255 to 288 (ANNRDHKNNKNNSTIDNAENLKEENLVGGSNNES) form a disordered region.

Belongs to the universal ribosomal protein uS2 family.

This Ehrlichia chaffeensis (strain ATCC CRL-10679 / Arkansas) protein is Small ribosomal subunit protein uS2.